The following is a 372-amino-acid chain: tRNA pseudouridine synthase D (372 aa).

The active-site Nucleophile is the D85. Residues 160–330 (GFTNYFGYQR…MQGSRRFMWG (171 aa)) form the TRUD domain.

The protein belongs to the pseudouridine synthase TruD family.

The catalysed reaction is uridine(13) in tRNA = pseudouridine(13) in tRNA. Functionally, responsible for synthesis of pseudouridine from uracil-13 in transfer RNAs. This Campylobacter jejuni (strain RM1221) protein is tRNA pseudouridine synthase D.